The following is a 200-amino-acid chain: 3-isopropylmalate dehydratase small subunit (200 aa).

It belongs to the LeuD family. LeuD type 1 subfamily. Heterodimer of LeuC and LeuD.

The catalysed reaction is (2R,3S)-3-isopropylmalate = (2S)-2-isopropylmalate. The protein operates within amino-acid biosynthesis; L-leucine biosynthesis; L-leucine from 3-methyl-2-oxobutanoate: step 2/4. Functionally, catalyzes the isomerization between 2-isopropylmalate and 3-isopropylmalate, via the formation of 2-isopropylmaleate. The sequence is that of 3-isopropylmalate dehydratase small subunit from Histophilus somni (strain 129Pt) (Haemophilus somnus).